Consider the following 251-residue polypeptide: uncharacterized protein (251 aa).

The a divalent metal cation site is built by H6, H8, E90, H130, H154, and D202.

This sequence belongs to the metallo-dependent hydrolases superfamily. TatD-type hydrolase family. A divalent metal cation serves as cofactor.

This is an uncharacterized protein from Haemophilus influenzae (strain ATCC 51907 / DSM 11121 / KW20 / Rd).